The following is a 911-amino-acid chain: MPVRKQDTQRALHLLEEYRSKLSQTEDRQLRSSIERVISIFQSNLFQALIDIQEFYEVTLLDNPKCVDHSKQCEPVQPGNPWESGSLSSAAVTSESLPGGLSPPVEKYRYQDEEVLPSERISPQVPNEVLGPELVHVSEKSLSEIENVHGFVSHSHISPIKPTEAVPPSSPIVPVTPALPVPAESPVVLPSTPQANPPPVLVNTDSLETPTYVNGTDADYEYEEITLERGNSGLGFSIAGGTDNPHIGDDSSIFITKIITGGAAAQDGRLRVNDCILRVNEADVRDVTHSKAVEALKEAGSIVRLYVKRRKAFRKNHEIKLIKGPKGLGFSIAGGVGNQHIPGDNSIYVTKIIEGGAAHKDGKLQIGDKLLAVNSVCLEEVTHEEAVTALKNTSDFVYLKAAKPTSMYINDGYAPPDITNSSSQSVDNHVSPSSYLGQTPASPARYSPISKAVLGDDEITREPRKVVLHRGSTGLGFNIVGGEDGEGIFISFILAGGPADLSGELRKGDRIISVNSVDLRAASHEQAAAALKNAGQAVTIVAQYRPEEYSRFEAKIHDLRETMMNSSVSSGSGSLRTSQKRSLYVRALFDYDKTKDSGLPSQGLNFKFGDILHVINASDDEWWQARQVTPDGESDEVGVIPSKRRVEKKERARLKTVKFNSKTRGDKGEIPDDMGSKGLKHVTSNASDSESSYHEYGCSKGGQEEYVLSYEPVNQQEVNYTRPVIILGPMKDRVNDDLISEFPDKFGSCVPHTTRPKRDYEVDGRDYHFVTSREQMEKDIQEHKFIEAGQYNNHLYGTSVQSVRAVAEKGKHCILDVSGNAIKRLQIAQLYPISIFIKPKSMENIMEMNKRLTDEQARKTFERAVRLEQEFTEHFTAIVQGDTLEDIYNQVKQIIEEQSGPYIWVPAKEKL.

Residues 4–64 enclose the L27 domain; the sequence is RKQDTQRALH…FYEVTLLDNP (61 aa). At Ser-39 the chain carries Phosphoserine; by CaMK2. The tract at residues 70-105 is disordered; that stretch reads SKQCEPVQPGNPWESGSLSSAAVTSESLPGGLSPPV. Polar residues predominate over residues 83–96; sequence ESGSLSSAAVTSES. Phosphoserine occurs at positions 122, 138, and 158. Positions 162 to 212 are interaction with SH3 domains; the sequence is PTEAVPPSSPIVPVTPALPVPAESPVVLPSTPQANPPPVLVNTDSLETPTY. PDZ domains lie at 224 to 310 and 318 to 404; these read EITL…VKRR and EIKL…AAKP. The required for interaction with MARCHF2 stretch occupies residues 224 to 545; it reads EITLERGNSG…QAVTIVAQYR (322 aa). Ser-232 carries the post-translational modification Phosphoserine; by CaMK2. The residue at position 398 (Tyr-398) is a Phosphotyrosine. Polar residues predominate over residues 419 to 441; the sequence is TNSSSQSVDNHVSPSSYLGQTPA. Residues 419–443 form a disordered region; it reads TNSSSQSVDNHVSPSSYLGQTPASP. Residues 465–545 form the PDZ 3 domain; that stretch reads KVVLHRGSTG…QAVTIVAQYR (81 aa). 9 positions are modified to phosphoserine: Ser-567, Ser-572, Ser-574, Ser-578, Ser-597, Ser-618, Ser-684, Ser-687, and Ser-841. Residues 580–650 form the SH3 domain; the sequence is KRSLYVRALF…PSKRRVEKKE (71 aa). Residues 662–696 form a disordered region; sequence KTRGDKGEIPDDMGSKGLKHVTSNASDSESSYHEY. In terms of domain architecture, Guanylate kinase-like spans 721–896; it reads TRPVIILGPM…IYNQVKQIIE (176 aa).

This sequence belongs to the MAGUK family. In terms of assembly, homotetramer. Interacts (via guanylate kinase-like domain) with DLGAP1, DLGAP2, DLGAP3, DLGAP4 and MAP1A. Interacts (via guanylate kinase-like domain) with KIF13B. May interact with HTR2A. Interacts (via PDZ domains) with GRIA1. Interacts (via PDZ domains) with GRIN2A. Interacts (via PDZ domains) with KCND2 and KCND3. Interacts (via PDZ domains) with KCNA1, KCNA2, KCNA3 and KCNA4. Interacts (via PDZ domains) with ADGRA3. Interacts with KCNF1. Interacts with CAMK2. Interacts with cytoskeleton-associated protein EPB41. Interacts with cytoskeleton-associated protein EZR. Found in a complex with KCNA5 and CAV3. Found in a complex with APC and CTNNB1. Interacts (via PDZ domains) with APC. Interacts with CDH1 through binding to PIK3R1. Forms multiprotein complexes with CASK, LIN7A, LIN7B, LIN7C, APBA1, and KCNJ12. Interacts with TOPK. Forms a tripartite complex composed of DLG1, MPP7 and LIN7 (LIN7A or LIN7C). May interact with TJAP1. Interacts with PTEN. Interacts with FRMPD4 (via C-terminus). Interacts with LRFN1 and LRFN2. Interacts with LRFN4 and SFPQ. Interacts (via PDZ domains) with ADGRA2 (via PDZ-binding motif). Interacts with ADAM10; this interaction recruits ADAM10 to the cell membrane during long-term depression in hippocampal neurons. Interacts with DGKI (via PDZ-binding motif). Interacts (via PDZ domains) with MARCHF2 (via PDZ domain); the interaction leads to DLG1 ubiqtuitination and degradation. Interacts (via N-terminus) with MPP3; this interaction connects CADM1 with DLG1 and links CADM1 with the regulatory subunit of phosphoinositide-3-kinase (PI3K) by forming a multiprotein complex and participates in cell spreading. In terms of processing, phosphorylated by MAPK12. Phosphorylation of Ser-39 modulates transport to the plasma membrane. Phosphorylation of Ser-232 regulates association with GRIN2A. Ubiquitinated; by MARCHF2 which results in its degradation. As to expression, widely expressed. Strongly expressed in epithelial cells, in the small intestine it is only detected in the vili. Expressed in brain, heart (at protein level), muscle, lung and liver. In the brain it was detected in olfactory bulbs, cerebral cortex, hippocampus, and spinal cord (at protein level).

The protein localises to the cell membrane. The protein resides in the basolateral cell membrane. It is found in the endoplasmic reticulum membrane. Its subcellular location is the postsynaptic density. It localises to the synapse. The protein localises to the sarcolemma. The protein resides in the cell junction. It is found in the cytoplasm. Its subcellular location is the apical cell membrane. Essential multidomain scaffolding protein required for normal development. Recruits channels, receptors and signaling molecules to discrete plasma membrane domains in polarized cells. Promotes epithelial cell layer barrier function via maintaining cell-cell adhesion. May play a role in adherens junction assembly, signal transduction, cell proliferation, synaptogenesis and lymphocyte activation. Regulates the excitability of cardiac myocytes by modulating the functional expression of Kv4 channels. Functional regulator of Kv1.5 channel. During long-term depression in hippocampal neurons, it recruits ADAM10 to the plasma membrane. The chain is Disks large homolog 1 from Rattus norvegicus (Rat).